A 141-amino-acid chain; its full sequence is Large ribosomal subunit protein uL11 (141 aa).

It belongs to the universal ribosomal protein uL11 family. As to quaternary structure, part of the ribosomal stalk of the 50S ribosomal subunit. Interacts with L10 and the large rRNA to form the base of the stalk. L10 forms an elongated spine to which L12 dimers bind in a sequential fashion forming a multimeric L10(L12)X complex. Post-translationally, one or more lysine residues are methylated.

Functionally, forms part of the ribosomal stalk which helps the ribosome interact with GTP-bound translation factors. The polypeptide is Large ribosomal subunit protein uL11 (Chloroherpeton thalassium (strain ATCC 35110 / GB-78)).